Consider the following 211-residue polypeptide: Homeobox protein Rhox5 (211 aa).

The tract at residues 38–129 is disordered; it reads FFQAGEGRDE…PLRRPGSTQR (92 aa). Composition is skewed to gly residues over residues 52–62 and 70–84; these read GQPGEGAVGTE and GGEG…GPVG. Residues 102-119 show a composition bias toward basic and acidic residues; sequence HEPVAEGTESVKSEDKQM. The segment at residues 119–176 is a DNA-binding region (homeobox; atypical); sequence MPLRRPGSTQRRLAELERILLSSGSSSGGRSLIDGWISVCPECRNWFKIRRAAYRRNR.

As to expression, highly expressed in placenta. Lower levels in testis, epididymis, ovary and skeletal muscle.

It localises to the nucleus. Functionally, transcription factor required for differentiation of embryonic stem cells (ESCs) into primordial germ cells. The sequence is that of Homeobox protein Rhox5 (Rhox5) from Rattus norvegicus (Rat).